The following is a 1567-amino-acid chain: MAPRKKNPAIKSSGTTSSKASPLPDWVKGGGPKPPPSYTKAAKQQQTQSAGNDTAISATGSSSSSSPVAAASSAGGGGGGGQGQPREMLFPPGSKTPLNMLYERVNKLPGWEKPIVEPRRHKQGYSCAVTLKKVNKKDASNPFTVTFEPKEPTLRLECQSSLEAKHWGATYALFRIFNHLSLNLALPPGPREYWVKMEAYKKTAPSHQDWMWASDPFEAAAKRDAEKAKKEQDKLAAADAASRGEVSIINAKLNGAAKPLSKAWQEAKEVRLASSLREKIEATIRRAMSIFPSASAAPLDLVEEDQDADTAAPNSTPNIDAAGLEKELTSYGFRRGHARSAISWLTSARIALSNPSSSSTTAAALVDPMLASAASLADREAALEYLMLYTPEEDLPARFKPSTTSESFVTSSKAGASGDALAVGWAVDKLSKQAGLPRKAVQAVFKRIAAAEHERNVELPRLVKEGLALEMMLRQMAGWDSPAQAEEQWTSDAILDAVLFFPTRVNDADKEEIEIKRADERMAVEAVLGDDRVVVPSEHQRLGVQDYDVTIAGPGTSVGGTEDVRLRISSHPQALYPLARDKTHAVALPAFCVVSKTLPSYLKLALTQHLLRAFQGDNRRMDWYDAIEAGDGGIVLSLVEELESMWSKMIDDPPLLSSVMQYLVGPDSAESSVEATPETSRAATPTGPSRIANKRRTGGGRALRRDAEVDAQLQRQQRQLHTSPSYSKMDETRRSLPAASAAREILGLIRSNRVVIIAGETGCGKTTQVPQFILDEAIEAGRGSECNIVVTQPRRVSAIGVASRVAVERGEKLDGKKKAVAPGSLVGYAIRGERRASRECRLLFTTTGVLLRRLGAGGDTDLKGISHVVVDEVHERNVDSDFLLLELRELLRRNSRIKVVLMSATINQETFASYFGKAPCISIPGRTFAVEDHYLEDIVQQSGFRPSGNEWRGSARGGKQIEQEIGQLRAHLQAQGVDEETCKAVESLSRSGGRISYELLGAVVRYVVERAENEELSGAADGDVGGAILVFCPGVGEIRQAIDAITTSVRGQSKVEILPLHANLSADEQRRVFQPVGAGRRKIVVSTNVAETSITIPDVSYVVDTGRVKETRFEPESGLTRLVECWASRAACKQRRGRAGRVRAGECFRLYSRYVDEKKMAAQQTPEMRRVPLESLFLEVKSMREDEDVKEYLNKALDPPSLASMDAALTNLIEAGALQSDRGYKSRLTSLGKHLAQLPLDLRLAKLLIMGTIFGCLGPMLTVASIMSCKPLFNTPFEKREEASKARASFAAAGCRSDLLADAAAFEEWQTMRAQRKTNGEIREWCESHFISQSSLRDIQTNRLDLLSHLQEMGFVAPDYSAFGVYDDERYDMNAQHAGVLRSVILAGLWPAVVRIDVPSAKFDQSSSGTVQREAEARQVKYFDRNGRVFLHPSSTLFSCKGFESSYLTTFAKSSTGAGADSKVYLRDATEVPLFALLLFGGKLKINHFAGGIGIGSNQSGGDAKDENWVRLRANARIGVLCAQLRRLLDAVLDHAIDEPQDMFAVPGCKDVLSVIGQVLQRDGLAA.

Disordered stretches follow at residues 1–95 (MAPR…PGSK) and 670–734 (ESSV…ETRR). Polar residues predominate over residues 10–20 (IKSSGTTSSKA). 2 stretches are compositionally biased toward low complexity: residues 39–48 (TKAAKQQQTQ) and 55–73 (AISATGSSSSSSPVAAASS). Gly residues predominate over residues 74-83 (AGGGGGGGQG). Composition is skewed to polar residues over residues 670–687 (ESSVEATPETSRAATPTG) and 713–726 (LQRQQRQLHTSPSY). A Helicase ATP-binding domain is found at 746–924 (LGLIRSNRVV…FGKAPCISIP (179 aa)). ATP is bound at residue 759-766 (GETGCGKT). Residues 871–874 (DEVH) carry the DEAH box motif. Residues 1003 to 1184 (VVRYVVERAE…SLFLEVKSMR (182 aa)) form the Helicase C-terminal domain.

Belongs to the DEAD box helicase family. DEAH subfamily.

This chain is Putative DEAH-box ATP-dependent helicase UM11114, found in Mycosarcoma maydis (Corn smut fungus).